Here is a 354-residue protein sequence, read N- to C-terminus: Chaperone protein dnaJ 49 (354 aa).

A J domain is found at 99-163; the sequence is DYYAILGLEK…NSRRQFDQVG (65 aa). A helical transmembrane segment spans residues 237 to 257; the sequence is CLTIIQILPFFLLLLLAYLPF.

Belongs to the DnaJ family. C/III subfamily.

The protein resides in the membrane. Plays a continuous role in plant development probably in the structural organization of compartments. The polypeptide is Chaperone protein dnaJ 49 (ATJ49) (Arabidopsis thaliana (Mouse-ear cress)).